Reading from the N-terminus, the 289-residue chain is 4-hydroxy-3-methylbut-2-enyl diphosphate reductase (289 aa).

[4Fe-4S] cluster is bound at residue Cys12. The (2E)-4-hydroxy-3-methylbut-2-enyl diphosphate site is built by His44 and His81. 2 residues coordinate dimethylallyl diphosphate: His44 and His81. Isopentenyl diphosphate is bound by residues His44 and His81. Cys103 contacts [4Fe-4S] cluster. His130 provides a ligand contact to (2E)-4-hydroxy-3-methylbut-2-enyl diphosphate. His130 is a binding site for dimethylallyl diphosphate. An isopentenyl diphosphate-binding site is contributed by His130. Catalysis depends on Glu132, which acts as the Proton donor. Thr174 serves as a coordination point for (2E)-4-hydroxy-3-methylbut-2-enyl diphosphate. Position 202 (Cys202) interacts with [4Fe-4S] cluster. The (2E)-4-hydroxy-3-methylbut-2-enyl diphosphate site is built by Ser230, Asn232, and Ser273. Ser230, Asn232, and Ser273 together coordinate dimethylallyl diphosphate. Ser230, Asn232, and Ser273 together coordinate isopentenyl diphosphate.

The protein belongs to the IspH family. Requires [4Fe-4S] cluster as cofactor.

It carries out the reaction isopentenyl diphosphate + 2 oxidized [2Fe-2S]-[ferredoxin] + H2O = (2E)-4-hydroxy-3-methylbut-2-enyl diphosphate + 2 reduced [2Fe-2S]-[ferredoxin] + 2 H(+). The enzyme catalyses dimethylallyl diphosphate + 2 oxidized [2Fe-2S]-[ferredoxin] + H2O = (2E)-4-hydroxy-3-methylbut-2-enyl diphosphate + 2 reduced [2Fe-2S]-[ferredoxin] + 2 H(+). It participates in isoprenoid biosynthesis; dimethylallyl diphosphate biosynthesis; dimethylallyl diphosphate from (2E)-4-hydroxy-3-methylbutenyl diphosphate: step 1/1. It functions in the pathway isoprenoid biosynthesis; isopentenyl diphosphate biosynthesis via DXP pathway; isopentenyl diphosphate from 1-deoxy-D-xylulose 5-phosphate: step 6/6. In terms of biological role, catalyzes the conversion of 1-hydroxy-2-methyl-2-(E)-butenyl 4-diphosphate (HMBPP) into a mixture of isopentenyl diphosphate (IPP) and dimethylallyl diphosphate (DMAPP). Acts in the terminal step of the DOXP/MEP pathway for isoprenoid precursor biosynthesis. The protein is 4-hydroxy-3-methylbut-2-enyl diphosphate reductase of Treponema denticola (strain ATCC 35405 / DSM 14222 / CIP 103919 / JCM 8153 / KCTC 15104).